A 438-amino-acid chain; its full sequence is Cobyrinate a,c-diamide synthase (438 aa).

The GATase cobBQ-type domain maps to 242–426; sequence TIAIARDAAF…FHAYFSSCPA (185 aa). The active-site Nucleophile is Cys325.

The protein belongs to the CobB/CbiA family. Mg(2+) is required as a cofactor.

It carries out the reaction cob(II)yrinate + 2 L-glutamine + 2 ATP + 2 H2O = cob(II)yrinate a,c diamide + 2 L-glutamate + 2 ADP + 2 phosphate + 2 H(+). It functions in the pathway cofactor biosynthesis; adenosylcobalamin biosynthesis; cob(II)yrinate a,c-diamide from sirohydrochlorin (anaerobic route): step 10/10. Catalyzes the ATP-dependent amidation of the two carboxylate groups at positions a and c of cobyrinate, using either L-glutamine or ammonia as the nitrogen source. This Herminiimonas arsenicoxydans protein is Cobyrinate a,c-diamide synthase.